A 217-amino-acid chain; its full sequence is MSKKLASPLSFLPLYNLLSAVGWSYLLYLVISLYPKVGQPAFFYQTKNVATLVQCGAIIEIINSFLGVVRSPLLTTVAQVSSRLLVVLGIFQLLPNTSGVQSVVYISLLLAWSITEIVRYLYYFFMLVFKNGAPKILILLRYNLFWILYPTGVASELRIIYCALNAAESQYSLLYKRILIAAMLAYIPGFPMLFLHMVAQRKKVMKSLRSSFGKKLI.

Residues Met-1–Phe-11 are Cytoplasmic-facing. Residues Leu-12 to Leu-29 traverse the membrane as a helical segment. Residues Val-30–Lys-47 lie on the Lumenal side of the membrane. A helical membrane pass occupies residues Asn-48–Leu-66. Residues Gly-67 to Thr-76 are Cytoplasmic-facing. A helical membrane pass occupies residues Val-77–Leu-94. Over Pro-95–Gly-99 the chain is Lumenal. The helical transmembrane segment at Val-100 to Ile-117 threads the bilayer. The Cytoplasmic portion of the chain corresponds to Val-118–Tyr-142. A helical membrane pass occupies residues Asn-143–Ile-160. Residues Tyr-149 and Glu-156 contribute to the active site. At Tyr-161–Ile-178 the chain is on the lumenal side. Residues Leu-179 to His-196 form a helical membrane-spanning segment. Over Met-197 to Ile-217 the chain is Cytoplasmic. The short motif at Lys-214–Ile-217 is the Endoplasmic reticulum retention signal element.

The protein belongs to the very long-chain fatty acids dehydratase HACD family.

The protein localises to the endoplasmic reticulum membrane. It is found in the vacuole membrane. It carries out the reaction a very-long-chain (3R)-3-hydroxyacyl-CoA = a very-long-chain (2E)-enoyl-CoA + H2O. The enzyme catalyses (3R)-hydroxyeicosanoyl-CoA = (2E)-eicosenoyl-CoA + H2O. The catalysed reaction is (3R)-hydroxydocosanoyl-CoA = (2E)-docosenoyl-CoA + H2O. It catalyses the reaction (3R)-hydroxyoctadecanoyl-CoA = (2E)-octadecenoyl-CoA + H2O. It carries out the reaction (3R)-hydroxytetracosanoyl-CoA = (2E)-tetracosenoyl-CoA + H2O. The enzyme catalyses (3R)-hydroxyhexacosanoyl-CoA = (2E)-hexacosenoyl-CoA + H2O. The catalysed reaction is (3R)-hydroxyhexadecanoyl-CoA = (2E)-hexadecenoyl-CoA + H2O. Its pathway is lipid metabolism; fatty acid biosynthesis. Functionally, catalyzes the third of the four reactions of the long-chain fatty acids elongation cycle. This endoplasmic reticulum-bound enzymatic process, allows the addition of two carbons to the chain of long- and very long-chain fatty acids/VLCFAs per cycle. This enzyme catalyzes the dehydration of the 3-hydroxyacyl-CoA intermediate into trans-2,3-enoyl-CoA, within each cycle of fatty acid elongation. Thereby, it participates in the production of VLCFAs of different chain lengths that are involved in multiple biological processes as precursors of membrane lipids and lipid mediators. The chain is Very-long-chain (3R)-3-hydroxyacyl-CoA dehydratase PHS1 (PHS1) from Saccharomyces cerevisiae (strain ATCC 204508 / S288c) (Baker's yeast).